The following is a 201-amino-acid chain: Pyridoxal 5'-phosphate synthase subunit PdxT (201 aa).

Position 49 to 51 (49 to 51 (GES)) interacts with L-glutamine. The Nucleophile role is filled by C81. L-glutamine is bound by residues R110 and 139 to 140 (IR). Active-site charge relay system residues include H180 and E182.

It belongs to the glutaminase PdxT/SNO family. In the presence of PdxS, forms a dodecamer of heterodimers. Only shows activity in the heterodimer.

It carries out the reaction aldehydo-D-ribose 5-phosphate + D-glyceraldehyde 3-phosphate + L-glutamine = pyridoxal 5'-phosphate + L-glutamate + phosphate + 3 H2O + H(+). The enzyme catalyses L-glutamine + H2O = L-glutamate + NH4(+). It participates in cofactor biosynthesis; pyridoxal 5'-phosphate biosynthesis. Its function is as follows. Catalyzes the hydrolysis of glutamine to glutamate and ammonia as part of the biosynthesis of pyridoxal 5'-phosphate. The resulting ammonia molecule is channeled to the active site of PdxS. This chain is Pyridoxal 5'-phosphate synthase subunit PdxT, found in Salinispora arenicola (strain CNS-205).